The following is a 158-amino-acid chain: pH 6 antigen (158 aa).

Positions 1–26 (MKMKCFAKNALAVTTLMIAACGMANA) are cleaved as a signal peptide.

Forms a homomer composed of subunits assembled in a large structure.

It is found in the fimbrium. Fibrillar structure, part of fimbriae, necessary for full virulence. In Yersinia pestis, this protein is pH 6 antigen (psaA).